Here is a 1486-residue protein sequence, read N- to C-terminus: Chromosome partition protein MukB (1486 aa).

34–41 is an ATP binding site; sequence GGNGAGKS. 3 coiled-coil regions span residues 326–418, 444–480, and 509–603; these read LEAD…QYNQ, LETFQAKELEATEKMLSLEQKMSMAQTAHSQFEQAYQ, and RHLA…RAPV. Residues 666–783 form a flexible hinge region; sequence PGGSEDQRLN…EVPLFGRAAR (118 aa). Coiled coils occupy residues 835 to 923, 977 to 1115, and 1209 to 1266; these read EAEI…AKLE, EMLS…TAKA, and VEAI…QNVS.

The protein belongs to the SMC family. MukB subfamily. Homodimerization via its hinge domain. Binds to DNA via its C-terminal region. Interacts, and probably forms a ternary complex, with MukE and MukF via its C-terminal region. The complex formation is stimulated by calcium or magnesium. Interacts with tubulin-related protein FtsZ.

It localises to the cytoplasm. It is found in the nucleoid. In terms of biological role, plays a central role in chromosome condensation, segregation and cell cycle progression. Functions as a homodimer, which is essential for chromosome partition. Involved in negative DNA supercoiling in vivo, and by this means organize and compact chromosomes. May achieve or facilitate chromosome segregation by condensation DNA from both sides of a centrally located replisome during cell division. The polypeptide is Chromosome partition protein MukB (Escherichia coli (strain 55989 / EAEC)).